A 101-amino-acid polypeptide reads, in one-letter code: Large ribosomal subunit protein uL24 (101 aa).

Belongs to the universal ribosomal protein uL24 family. In terms of assembly, part of the 50S ribosomal subunit.

Functionally, one of two assembly initiator proteins, it binds directly to the 5'-end of the 23S rRNA, where it nucleates assembly of the 50S subunit. Its function is as follows. One of the proteins that surrounds the polypeptide exit tunnel on the outside of the subunit. The chain is Large ribosomal subunit protein uL24 from Borrelia hermsii (strain HS1 / DAH).